Reading from the N-terminus, the 49-residue chain is Defensin-like protein 1 (49 aa).

Intrachain disulfides connect Cys3/Cys49, Cys14/Cys35, Cys20/Cys43, and Cys24/Cys45.

It belongs to the DEFL family.

It is found in the secreted. Its function is as follows. Possesses antimicrobial activity sensitive to inorganic cations. Binds specifically to the fungal plasma membrane. Has no inhibitory effect on insect gut alpha-amylase. This Clitoria ternatea (Butterfly pea) protein is Defensin-like protein 1.